The sequence spans 283 residues: Thymidylate synthase (283 aa).

Arg-22 serves as a coordination point for dUMP. Cys-160 (nucleophile) is an active-site residue. DUMP contacts are provided by residues Arg-180 to Asp-183, Asn-191, and His-221 to Tyr-223. Asp-183 lines the (6R)-5,10-methylene-5,6,7,8-tetrahydrofolate pocket. Ser-282 lines the (6R)-5,10-methylene-5,6,7,8-tetrahydrofolate pocket.

It belongs to the thymidylate synthase family. Bacterial-type ThyA subfamily. In terms of assembly, homodimer.

The protein localises to the cytoplasm. The catalysed reaction is dUMP + (6R)-5,10-methylene-5,6,7,8-tetrahydrofolate = 7,8-dihydrofolate + dTMP. Its pathway is pyrimidine metabolism; dTTP biosynthesis. Catalyzes the reductive methylation of 2'-deoxyuridine-5'-monophosphate (dUMP) to 2'-deoxythymidine-5'-monophosphate (dTMP) while utilizing 5,10-methylenetetrahydrofolate (mTHF) as the methyl donor and reductant in the reaction, yielding dihydrofolate (DHF) as a by-product. This enzymatic reaction provides an intracellular de novo source of dTMP, an essential precursor for DNA biosynthesis. In Histophilus somni (strain 129Pt) (Haemophilus somnus), this protein is Thymidylate synthase.